The following is a 485-amino-acid chain: Mitochondrial metalloendopeptidase OMA1 (485 aa).

The transit peptide at 1 to 16 (MKPSLKRRLLLLSRKF) directs the protein to the mitochondrion. Topologically, residues 17 to 147 (AKASIRKLLR…GPGRWFQNPR (131 aa)) are mitochondrial matrix. Residues 148–168 (TVFTVVLVGSVGLITLIVGNT) traverse the membrane as a helical segment. At 169–485 (ETIPYTKRTH…AGRTGVEGFL (317 aa)) the chain is on the mitochondrial intermembrane side. Histidine 352 lines the Zn(2+) pocket. The active site involves glutamate 353. Zn(2+)-binding residues include histidine 356 and glutamate 405. A required for protease activation region spans residues 456–485 (KLLAQANVMEEALMIYREVQAGRTGVEGFL).

The protein belongs to the peptidase M48A family. As to quaternary structure, homooligomer. Requires Zn(2+) as cofactor.

It is found in the mitochondrion inner membrane. Protease that is part of the quality control system in the inner membrane of mitochondria. Metalloendopeptidase that modulates the oxidative phosphorylation (OXPHOS) system and plant growth. Involved in tolerance mechanisms to heat, osmotic and oxidative stresses. The protein is Mitochondrial metalloendopeptidase OMA1 of Arabidopsis thaliana (Mouse-ear cress).